Here is a 186-residue protein sequence, read N- to C-terminus: Translation initiation factor IF-3 (186 aa).

The protein belongs to the IF-3 family. In terms of assembly, monomer.

It localises to the cytoplasm. Its function is as follows. IF-3 binds to the 30S ribosomal subunit and shifts the equilibrium between 70S ribosomes and their 50S and 30S subunits in favor of the free subunits, thus enhancing the availability of 30S subunits on which protein synthesis initiation begins. The protein is Translation initiation factor IF-3 of Borreliella afzelii (strain PKo) (Borrelia afzelii).